The sequence spans 268 residues: Tryptophan synthase alpha chain (268 aa).

Residues Glu-49 and Asp-60 each act as proton acceptor in the active site.

The protein belongs to the TrpA family. As to quaternary structure, tetramer of two alpha and two beta chains.

The catalysed reaction is (1S,2R)-1-C-(indol-3-yl)glycerol 3-phosphate + L-serine = D-glyceraldehyde 3-phosphate + L-tryptophan + H2O. Its pathway is amino-acid biosynthesis; L-tryptophan biosynthesis; L-tryptophan from chorismate: step 5/5. Functionally, the alpha subunit is responsible for the aldol cleavage of indoleglycerol phosphate to indole and glyceraldehyde 3-phosphate. The protein is Tryptophan synthase alpha chain of Escherichia fergusonii (strain ATCC 35469 / DSM 13698 / CCUG 18766 / IAM 14443 / JCM 21226 / LMG 7866 / NBRC 102419 / NCTC 12128 / CDC 0568-73).